The chain runs to 87 residues: UPF0250 protein BCc_307 (87 aa).

This sequence belongs to the UPF0250 family.

This chain is UPF0250 protein BCc_307, found in Buchnera aphidicola subsp. Cinara cedri (strain Cc).